A 590-amino-acid chain; its full sequence is V-type ATP synthase alpha chain (590 aa).

234-241 (GGFGAGKT) provides a ligand contact to ATP.

It belongs to the ATPase alpha/beta chains family.

The catalysed reaction is ATP + H2O + 4 H(+)(in) = ADP + phosphate + 5 H(+)(out). In terms of biological role, produces ATP from ADP in the presence of a proton gradient across the membrane. The V-type alpha chain is a catalytic subunit. This chain is V-type ATP synthase alpha chain, found in Halothermothrix orenii (strain H 168 / OCM 544 / DSM 9562).